The sequence spans 390 residues: Two-component response regulator ORR29 (390 aa).

Residues 13 to 130 enclose the Response regulatory domain; sequence SAMVIDEDKC…TIKNLWQYVD (118 aa). D65 bears the 4-aspartylphosphate mark. A DNA-binding region (myb-like GARP) is located at residues 169–226; the sequence is KKYYLMWTPHLQKKFLHALQILGKDASPKNIKKIMGVDNIDCRQIAAHLQKHRLRLTK. Disordered regions lie at residues 233-271 and 303-339; these read FTTD…QPTE and SKHS…SGDH. Residues 257 to 271 are compositionally biased toward polar residues; it reads NASTLQPRSNTQPTE.

This sequence belongs to the ARR family. Type-B subfamily. Two-component system major event consists of a His-to-Asp phosphorelay between a sensor histidine kinase (HK) and a response regulator (RR). In plants, the His-to-Asp phosphorelay involves an additional intermediate named Histidine-containing phosphotransfer protein (HPt). This multistep phosphorelay consists of a His-Asp-His-Asp sequential transfer of a phosphate group between first a His and an Asp of the HK protein, followed by the transfer to a conserved His of the HPt protein and finally the transfer to an Asp in the receiver domain of the RR protein.

It is found in the nucleus. Functionally, transcriptional activator that binds specific DNA sequence. Functions as a response regulator involved in His-to-Asp phosphorelay signal transduction system. Phosphorylation of the Asp residue in the receiver domain activates the ability of the protein to promote the transcription of target genes. May directly activate some type-A response regulators in response to cytokinins. The polypeptide is Two-component response regulator ORR29 (Oryza sativa subsp. indica (Rice)).